We begin with the raw amino-acid sequence, 609 residues long: UvrABC system protein C (609 aa).

The GIY-YIG domain occupies 16-94 (SSAGVYRMYD…IKQYMPKYNV (79 aa)). In terms of domain architecture, UVR spans 203-238 (KQVISELVAKMEEAAGQQAYEQAARFRDQIMALRRV).

Belongs to the UvrC family. Interacts with UvrB in an incision complex.

It localises to the cytoplasm. Functionally, the UvrABC repair system catalyzes the recognition and processing of DNA lesions. UvrC both incises the 5' and 3' sides of the lesion. The N-terminal half is responsible for the 3' incision and the C-terminal half is responsible for the 5' incision. This is UvrABC system protein C from Shewanella sp. (strain ANA-3).